Reading from the N-terminus, the 533-residue chain is Probable protein kinase UbiB (533 aa).

The chain crosses the membrane as a helical span at residues 24-44; it reads LILELPMLPWWLRLLGATLPW. Residues 126–494 enclose the Protein kinase domain; that stretch reads RFEREPLASA…WKGSRHDWLG (369 aa). ATP-binding positions include 132–140 and Lys-154; that span reads LASASVAQV. The active-site Proton acceptor is the Asp-289. A helical membrane pass occupies residues 510–530; sequence LGQQLEAWPAWVMLAGGVFLI.

Belongs to the ABC1 family. UbiB subfamily.

Its subcellular location is the cell inner membrane. It participates in cofactor biosynthesis; ubiquinone biosynthesis [regulation]. Is probably a protein kinase regulator of UbiI activity which is involved in aerobic coenzyme Q (ubiquinone) biosynthesis. This is Probable protein kinase UbiB from Pseudomonas aeruginosa (strain LESB58).